The chain runs to 390 residues: Nuclear receptor subfamily 2 group F member 6 (390 aa).

The span at 1–15 (MAMVTGGWGDPGGDT) shows a compositional bias: gly residues. Residues 1–50 (MAMVTGGWGDPGGDTNGVDKAGGSYPRATEDDSASPPGATSDAEPGDEER) form a disordered region. A phosphoserine mark is found at S35 and S41. A DNA-binding region (nuclear receptor) is located at residues 54–129 (QVDCVVCGDK…VGMRKEAVQR (76 aa)). The NR C4-type zinc-finger motif lies at 57 to 77 (CVVCGDKSSGKHYGVFTCEGC). Residue S84 is modified to Phosphoserine. An NR C4-type zinc finger spans residues 93 to 117 (CRSNRDCQIDQHHRNQCQYCRLKKC). An NR LBD domain is found at 157-380 (PVSELIAQLL…TLIRDMLLSG (224 aa)). Residues 314-390 (LQEKAQVALT…STFNWPYGSG (77 aa)) are important for dimerization.

The protein belongs to the nuclear hormone receptor family. NR2 subfamily. In terms of assembly, binds DNA as dimer; homodimer and heterodimer with NR2F2 and probably NR2F1. Interacts with THRB.

It is found in the nucleus. In terms of biological role, transcription factor predominantly involved in transcriptional repression. Binds to promoter/enhancer response elements that contain the imperfect 5'-AGGTCA-3' direct or inverted repeats with various spacings which are also recognized by other nuclear hormone receptors. Involved in modulation of hormonal responses. Represses transcriptional activity of the lutropin-choriogonadotropic hormone receptor/LHCGR gene, the renin/REN gene and the oxytocin-neurophysin/OXT gene. Represses the triiodothyronine-dependent and -independent transcriptional activity of the thyroid hormone receptor gene in a cell type-specific manner. The corepressing function towards thyroid hormone receptor beta/THRB involves at least in part the inhibition of THRB binding to triiodothyronine response elements (TREs) by NR2F6. Inhibits NFATC transcription factor DNA binding and subsequently its transcriptional activity. Acts as transcriptional repressor of IL-17 expression in Th-17 differentiated CD4(+) T cells and may be involved in induction and/or maintenance of peripheral immunological tolerance and autoimmunity. Involved in development of forebrain circadian clock; is required early in the development of the locus coeruleus (LC). This is Nuclear receptor subfamily 2 group F member 6 (Nr2f6) from Mus musculus (Mouse).